We begin with the raw amino-acid sequence, 387 residues long: Exodeoxyribonuclease 7 large subunit (387 aa).

The protein belongs to the XseA family. In terms of assembly, heterooligomer composed of large and small subunits.

It is found in the cytoplasm. The catalysed reaction is Exonucleolytic cleavage in either 5'- to 3'- or 3'- to 5'-direction to yield nucleoside 5'-phosphates.. Its function is as follows. Bidirectionally degrades single-stranded DNA into large acid-insoluble oligonucleotides, which are then degraded further into small acid-soluble oligonucleotides. In Parasynechococcus marenigrum (strain WH8102), this protein is Exodeoxyribonuclease 7 large subunit.